The primary structure comprises 646 residues: Peptidylprolyl isomerase domain and WD repeat-containing protein 1 (646 aa).

The tract at residues 1–30 (MAAESGSDFQQRRRRRRDPEEPEKTELSER) is disordered. Position 2 is an N-acetylalanine (Ala2). Basic and acidic residues predominate over residues 17–30 (RDPEEPEKTELSER). WD repeat units lie at residues 88–126 (MHRD…IEFV), 131–170 (SHLG…MINM), 221–260 (LHTS…YKFP), and 278–319 (KCKA…RVFD). Basic and acidic residues predominate over residues 455-478 (EPEDTKSADSDRDVFNEKPSKEEV). Residues 455 to 490 (EPEDTKSADSDRDVFNEKPSKEEVMAATQAEGPKRV) form a disordered region. The region spanning 490–645 (VSDSAIIHTS…EDVSIINITV (156 aa)) is the PPIase cyclophilin-type domain.

This sequence belongs to the cyclophilin-type PPIase family. PPIL1 subfamily. Identified in the spliceosome C complex.

Its subcellular location is the nucleus. It carries out the reaction [protein]-peptidylproline (omega=180) = [protein]-peptidylproline (omega=0). With respect to regulation, inhibited by cyclosporin A (CsA). Its function is as follows. PPIase that catalyzes the cis-trans isomerization of proline imidic peptide bonds in oligopeptides and may therefore assist protein folding. May be involved in pre-mRNA splicing. This Pongo abelii (Sumatran orangutan) protein is Peptidylprolyl isomerase domain and WD repeat-containing protein 1.